A 62-amino-acid chain; its full sequence is Large ribosomal subunit protein bL32 (62 aa).

Residues 1–19 (MPNPKRRHSKARTGNRRAH) are compositionally biased toward basic residues. The interval 1–23 (MPNPKRRHSKARTGNRRAHDHLS) is disordered.

It belongs to the bacterial ribosomal protein bL32 family.

This is Large ribosomal subunit protein bL32 from Koribacter versatilis (strain Ellin345).